A 181-amino-acid chain; its full sequence is Large ribosomal subunit protein uL6 (181 aa).

The protein belongs to the universal ribosomal protein uL6 family. In terms of assembly, part of the 50S ribosomal subunit.

This protein binds to the 23S rRNA, and is important in its secondary structure. It is located near the subunit interface in the base of the L7/L12 stalk, and near the tRNA binding site of the peptidyltransferase center. In Rhodopirellula baltica (strain DSM 10527 / NCIMB 13988 / SH1), this protein is Large ribosomal subunit protein uL6.